The following is a 454-amino-acid chain: Histidine--tRNA ligase (454 aa).

The tract at residues 434 to 454 is disordered; sequence ADAGAWNPPTEDLHPGVIGTW.

It belongs to the class-II aminoacyl-tRNA synthetase family. As to quaternary structure, homodimer.

Its subcellular location is the cytoplasm. The enzyme catalyses tRNA(His) + L-histidine + ATP = L-histidyl-tRNA(His) + AMP + diphosphate + H(+). This is Histidine--tRNA ligase (hisS) from Cutibacterium acnes (strain DSM 16379 / KPA171202) (Propionibacterium acnes).